We begin with the raw amino-acid sequence, 792 residues long: Cis-abienol synthase, chloroplastic (792 aa).

A chloroplast-targeting transit peptide spans 1–37; sequence MVLGLRSKIIPLPDHKLGNIKLGSVTNAICHRPCRVR. Positions 539, 543, 684, and 692 each coordinate Mg(2+). The DDXXD motif signature appears at 539–543; sequence DDFFD.

Belongs to the terpene synthase family. Requires Mg(2+) as cofactor. Expressed specifically in trichomes.

The protein resides in the plastid. The protein localises to the chloroplast. It carries out the reaction 8-hydroxycopalyl diphosphate = cis-abienol + diphosphate. Its pathway is secondary metabolite biosynthesis; terpenoid biosynthesis. Involved in the biosynthesis of cis-abienol, a labdane diterpene that can be used as synthesis precursor of ambergris substitution fragance products. The chain is Cis-abienol synthase, chloroplastic from Nicotiana tabacum (Common tobacco).